A 123-amino-acid chain; its full sequence is Small ribosomal subunit protein uS12 (123 aa).

Asp-89 carries the post-translational modification 3-methylthioaspartic acid.

It belongs to the universal ribosomal protein uS12 family. As to quaternary structure, part of the 30S ribosomal subunit. Contacts proteins S8 and S17. May interact with IF1 in the 30S initiation complex.

In terms of biological role, with S4 and S5 plays an important role in translational accuracy. Its function is as follows. Interacts with and stabilizes bases of the 16S rRNA that are involved in tRNA selection in the A site and with the mRNA backbone. Located at the interface of the 30S and 50S subunits, it traverses the body of the 30S subunit contacting proteins on the other side and probably holding the rRNA structure together. The combined cluster of proteins S8, S12 and S17 appears to hold together the shoulder and platform of the 30S subunit. This Desulfovibrio desulfuricans (strain ATCC 27774 / DSM 6949 / MB) protein is Small ribosomal subunit protein uS12.